The following is a 126-amino-acid chain: Holo-[acyl-carrier-protein] synthase (126 aa).

Positions 9 and 58 each coordinate Mg(2+).

Belongs to the P-Pant transferase superfamily. AcpS family. Mg(2+) is required as a cofactor.

It is found in the cytoplasm. It carries out the reaction apo-[ACP] + CoA = holo-[ACP] + adenosine 3',5'-bisphosphate + H(+). In terms of biological role, transfers the 4'-phosphopantetheine moiety from coenzyme A to a Ser of acyl-carrier-protein. The polypeptide is Holo-[acyl-carrier-protein] synthase (Enterobacter sp. (strain 638)).